The primary structure comprises 92 residues: Small ribosomal subunit protein uS19 (92 aa).

Belongs to the universal ribosomal protein uS19 family.

Protein S19 forms a complex with S13 that binds strongly to the 16S ribosomal RNA. This chain is Small ribosomal subunit protein uS19, found in Parvibaculum lavamentivorans (strain DS-1 / DSM 13023 / NCIMB 13966).